The chain runs to 146 residues: Large ribosomal subunit protein uL15 (146 aa).

Residues 1–10 (MKLHELKPAE) show a composition bias toward basic and acidic residues. Residues 1–51 (MKLHELKPAEGSRQVRNRVGRGTSSGNGKTAGRGQKGQKARSGGGVRLGFE) are disordered. Composition is skewed to gly residues over residues 23–35 (TSSG…GRGQ) and 42–51 (SGGGVRLGFE).

The protein belongs to the universal ribosomal protein uL15 family. As to quaternary structure, part of the 50S ribosomal subunit.

In terms of biological role, binds to the 23S rRNA. The protein is Large ribosomal subunit protein uL15 of Enterococcus faecalis (strain ATCC 700802 / V583).